A 249-amino-acid chain; its full sequence is Exosome complex component Rrp41 (249 aa).

Belongs to the RNase PH family. Rrp41 subfamily. As to quaternary structure, component of the archaeal exosome complex. Forms a hexameric ring-like arrangement composed of 3 Rrp41-Rrp42 heterodimers. The hexameric ring associates with a trimer of Rrp4 and/or Csl4 subunits.

It localises to the cytoplasm. Its function is as follows. Catalytic component of the exosome, which is a complex involved in RNA degradation. Has 3'-&gt;5' exoribonuclease activity. Can also synthesize heteromeric RNA-tails. The protein is Exosome complex component Rrp41 of Thermococcus gammatolerans (strain DSM 15229 / JCM 11827 / EJ3).